The primary structure comprises 257 residues: UPF0246 protein swp_3736 (257 aa).

It belongs to the UPF0246 family.

The chain is UPF0246 protein swp_3736 from Shewanella piezotolerans (strain WP3 / JCM 13877).